A 386-amino-acid polypeptide reads, in one-letter code: S-adenosylmethionine synthase (386 aa).

His16 is an ATP binding site. A Mg(2+)-binding site is contributed by Asp18. Residue Glu44 participates in K(+) binding. L-methionine-binding residues include Glu57 and Gln100. The flexible loop stretch occupies residues 100–110 (QSRDITQGVDR). Residues 165–167 (DAK), Asp240, 246–247 (RK), Ala263, and Lys267 each bind ATP. Asp240 serves as a coordination point for L-methionine. Lys271 contributes to the L-methionine binding site.

The protein belongs to the AdoMet synthase family. In terms of assembly, homotetramer; dimer of dimers. Requires Mg(2+) as cofactor. K(+) serves as cofactor.

It is found in the cytoplasm. It catalyses the reaction L-methionine + ATP + H2O = S-adenosyl-L-methionine + phosphate + diphosphate. Its pathway is amino-acid biosynthesis; S-adenosyl-L-methionine biosynthesis; S-adenosyl-L-methionine from L-methionine: step 1/1. Catalyzes the formation of S-adenosylmethionine (AdoMet) from methionine and ATP. The overall synthetic reaction is composed of two sequential steps, AdoMet formation and the subsequent tripolyphosphate hydrolysis which occurs prior to release of AdoMet from the enzyme. This Francisella tularensis subsp. tularensis (strain WY96-3418) protein is S-adenosylmethionine synthase.